The primary structure comprises 362 residues: MEKITVTLGERSYPITIAAGLFNDPASFKPLKAGDQVMLVTNQTLAPLYLDSLRAVLEHGGIKVDQVILPDGEQYKSLSVMEQVFSALLEKPHGRDTTLVALGGGVVGDLTGFAAACYQRGVRFIQVPTTLLSQVDSSVGGKTAVNHPLGKNMIGAFYQPASVVVDLNCLKTLPPRELASGLAEVIKYGIILDAAFFDWLENNIDALLALDMSALAYCIRRCCELKADVVAADEREESGARALLNLGHTYGHAIEAEMGYGVWLHGEAVAAGMVMAAQTSRRLGQLSVSDVERIKKLLLRAGLPVCGPKEMAPESYLPHMMRDKKVLAGELRLVLPTAIGKSEIRGGVAHDMVLASIADCRP.

Residues 71 to 76 (DGEQYK), 105 to 109 (GVVGD), 129 to 130 (TT), Lys142, Lys151, and 169 to 172 (CLKT) contribute to the NAD(+) site. 3 residues coordinate Zn(2+): Glu184, His248, and His265.

The protein belongs to the sugar phosphate cyclases superfamily. Dehydroquinate synthase family. The cofactor is Co(2+). Zn(2+) is required as a cofactor. Requires NAD(+) as cofactor.

Its subcellular location is the cytoplasm. It catalyses the reaction 7-phospho-2-dehydro-3-deoxy-D-arabino-heptonate = 3-dehydroquinate + phosphate. It participates in metabolic intermediate biosynthesis; chorismate biosynthesis; chorismate from D-erythrose 4-phosphate and phosphoenolpyruvate: step 2/7. Functionally, catalyzes the conversion of 3-deoxy-D-arabino-heptulosonate 7-phosphate (DAHP) to dehydroquinate (DHQ). In Yersinia pseudotuberculosis serotype O:1b (strain IP 31758), this protein is 3-dehydroquinate synthase.